We begin with the raw amino-acid sequence, 37 residues long: Omega-agatoxin-Aa3d (37 aa).

The protein belongs to the neurotoxin 04 (omega-agtx) family. 03 (type II/III omega-agtx) subfamily. In terms of processing, disulfide bonds are present. In terms of tissue distribution, expressed by the venom gland.

The protein resides in the secreted. Its function is as follows. Omega-agatoxins are antagonists of voltage-gated calcium channels. This toxin blocks calcium channels in insect central neurons but not at peripheral neuromuscular junctions. In vertebrates, it is broadly active against all high-threshold Cav1/CACNA1 channels and Cav2.2/CACNA1B channels. The protein is Omega-agatoxin-Aa3d of Agelenopsis aperta (North American funnel-web spider).